Here is a 208-residue protein sequence, read N- to C-terminus: MSYKLTYFPIRGLAEPIRLLLVDQGIKFTDEHIPKDDFVSIKSQFQFGQLPCFYDGDQQIVQSGAILRHLARKFNLNGENNAETSYVDMFYEGIRDLHSKYTRMIYEAYETQKDPFIKNILPQELAKLEKLLATRDNGKNFILGDKISFADYVLFEELDVQQILDPHCLEKFPLLKAFHQRLGDKPKIKEYCAKRNASKMPVNGNGKQ.

The GST N-terminal domain occupies 1–78 (MSYKLTYFPI…HLARKFNLNG (78 aa)). Residues Y7, K42, 49 to 50 (QL), and 62 to 63 (QS) contribute to the glutathione site. The region spanning 80-200 (NNAETSYVDM…YCAKRNASKM (121 aa)) is the GST C-terminal domain.

It belongs to the GST superfamily. Pi family. In terms of assembly, homodimer.

The catalysed reaction is RX + glutathione = an S-substituted glutathione + a halide anion + H(+). Functionally, conjugation of reduced glutathione to a wide number of exogenous and endogenous hydrophobic electrophiles. The polypeptide is Glutathione S-transferase (Dirofilaria immitis (Canine heartworm)).